A 657-amino-acid polypeptide reads, in one-letter code: Glycogen debranching enzyme (657 aa).

Asp-336 serves as the catalytic Nucleophile. Glu-371 acts as the Proton donor in catalysis. The disordered stretch occupies residues 460-479; sequence ANGEENRDGTNNNYSNNHGK.

It belongs to the glycosyl hydrolase 13 family.

The catalysed reaction is Hydrolysis of (1-&gt;6)-alpha-D-glucosidic linkages to branches with degrees of polymerization of three or four glucose residues in limit dextrin.. It functions in the pathway glycan degradation; glycogen degradation. Functionally, removes maltotriose and maltotetraose chains that are attached by 1,6-alpha-linkage to the limit dextrin main chain, generating a debranched limit dextrin. This is Glycogen debranching enzyme from Escherichia coli O6:K15:H31 (strain 536 / UPEC).